Consider the following 444-residue polypeptide: Vacuolar protein sorting-associated protein 4B (444 aa).

Residues 4 to 82 (TSPNLQKAID…KEYLKNKEKK (79 aa)) enclose the MIT domain. A coiled-coil region spans residues 19–82 (AQEDKAGNYE…KEYLKNKEKK (64 aa)). A compositionally biased stretch (basic and acidic residues) spans 78–88 (NKEKKAQKPVK). Residues 78 to 117 (NKEKKAQKPVKEGQPSPADEKGNDSDGEGESDDPEKKKLQ) form a disordered region. Residues Ser-93, Ser-102, and Ser-108 each carry the phosphoserine modification. 174-181 (GPPGTGKS) provides a ligand contact to ATP. Ser-410 is subject to Phosphoserine.

Belongs to the AAA ATPase family. As to quaternary structure, proposed to be monomeric or homodimeric in nucleotide-free form and to oligomerize upon binding to ATP to form two stacked hexameric or heptameric rings with a central pore through which ESCRT-III substrates are translocated in an ATP-dependent manner. In vitro, associates on the inside of a helical tubular structure formed by a CHMP2A-CHMP3 polymer. Interacts with CHMP1A, CHMP1B, CHMP2A, CHMP4B and CHMP6. Interacts with VPS4A; the interaction suggests a heteromeric assembly with VPS4A. Interacts with VTA1.

The protein localises to the late endosome membrane. It catalyses the reaction ATP + H2O = ADP + phosphate + H(+). Functionally, involved in late steps of the endosomal multivesicular bodies (MVB) pathway. Recognizes membrane-associated ESCRT-III assemblies and catalyzes their disassembly, possibly in combination with membrane fission. Redistributes the ESCRT-III components to the cytoplasm for further rounds of MVB sorting. MVBs contain intraluminal vesicles (ILVs) that are generated by invagination and scission from the limiting membrane of the endosome and mostly are delivered to lysosomes enabling degradation of membrane proteins, such as stimulated growth factor receptors, lysosomal enzymes and lipids. VPS4A/B are required for the exosomal release of SDCBP, CD63 and syndecan. In terms of biological role, (Microbial infection) In conjunction with the ESCRT machinery also appears to function in topologically equivalent membrane fission events, such as the terminal stages of cytokinesis and enveloped virus budding (lentiviruses). This Pongo abelii (Sumatran orangutan) protein is Vacuolar protein sorting-associated protein 4B (VPS4B).